A 224-amino-acid chain; its full sequence is Peptidyl-prolyl cis-trans isomerase FKBP3 (224 aa).

Residue Ala2 is modified to N-acetylalanine. Ser36 carries the phosphoserine modification. Positions 87–119 (NVKLNEDKPKETKSEETPDEGPPKYTKSVLKKG) are disordered. Basic and acidic residues predominate over residues 89–102 (KLNEDKPKETKSEE). Lys99 is subject to N6-acetyllysine. Residues 128–224 (GDVVHCWYTG…IFEVELVDID (97 aa)) form the PPIase FKBP-type domain. Ser152 carries the post-translational modification Phosphoserine. An N6-acetyllysine modification is found at Lys170.

This sequence belongs to the FKBP-type PPIase family.

The protein resides in the nucleus. It carries out the reaction [protein]-peptidylproline (omega=180) = [protein]-peptidylproline (omega=0). With respect to regulation, inhibited preferentially by rapamycin over FK506. In terms of biological role, FK506- and rapamycin-binding proteins (FKBPs) constitute a family of receptors for the two immunosuppressants which inhibit T-cell proliferation by arresting two distinct cytoplasmic signal transmission pathways. PPIases accelerate the folding of proteins. This Oryctolagus cuniculus (Rabbit) protein is Peptidyl-prolyl cis-trans isomerase FKBP3 (FKBP3).